Here is a 463-residue protein sequence, read N- to C-terminus: Exodeoxyribonuclease 7 large subunit (463 aa).

The protein belongs to the XseA family. Heterooligomer composed of large and small subunits.

The protein localises to the cytoplasm. The catalysed reaction is Exonucleolytic cleavage in either 5'- to 3'- or 3'- to 5'-direction to yield nucleoside 5'-phosphates.. In terms of biological role, bidirectionally degrades single-stranded DNA into large acid-insoluble oligonucleotides, which are then degraded further into small acid-soluble oligonucleotides. This Pseudomonas syringae pv. syringae (strain B728a) protein is Exodeoxyribonuclease 7 large subunit.